The primary structure comprises 194 residues: Oligoribonuclease (194 aa).

Positions 11-174 (LIWIDLEMTG…SDVRDSIDEL (164 aa)) constitute an Exonuclease domain. Residue Y132 is part of the active site.

This sequence belongs to the oligoribonuclease family.

It is found in the cytoplasm. In terms of biological role, 3'-to-5' exoribonuclease specific for small oligoribonucleotides. This Xanthomonas euvesicatoria pv. vesicatoria (strain 85-10) (Xanthomonas campestris pv. vesicatoria) protein is Oligoribonuclease.